A 353-amino-acid chain; its full sequence is Probable transport protein YPL264C (353 aa).

The Cytoplasmic portion of the chain corresponds to Met-1–Gly-16. The helical transmembrane segment at Leu-17–Leu-37 threads the bilayer. Residues Tyr-24–Arg-160 enclose the EamA 1 domain. Over Glu-38–Pro-51 the chain is Extracellular. Residues Leu-52 to Tyr-69 traverse the membrane as a helical segment. Topologically, residues Met-70–Arg-94 are cytoplasmic. Residues Gly-95–Ser-115 traverse the membrane as a helical segment. Position 116 (Asp-116) is a topological domain, extracellular. The helical transmembrane segment at Ala-117–Gly-137 threads the bilayer. The Cytoplasmic portion of the chain corresponds to Glu-138 to Glu-144. The chain crosses the membrane as a helical span at residues Ala-145–Phe-165. The Extracellular portion of the chain corresponds to Gly-166–Arg-188. Residues Leu-189 to Ile-209 form a helical membrane-spanning segment. One can recognise an EamA 2 domain in the interval Cys-200 to Asn-326. Over Arg-210 to Ala-218 the chain is Cytoplasmic. The chain crosses the membrane as a helical span at residues Ile-219–Leu-239. Residues Ile-240 to Trp-254 lie on the Extracellular side of the membrane. A helical membrane pass occupies residues Gly-255–Ile-275. The Cytoplasmic segment spans residues Gln-276–Arg-282. A helical transmembrane segment spans residues Gly-283 to His-303. His-304 is a topological domain (extracellular). Residues Trp-305–Ile-325 traverse the membrane as a helical segment. Topologically, residues Asn-326–Asp-353 are cytoplasmic.

The protein localises to the membrane. The chain is Probable transport protein YPL264C from Saccharomyces cerevisiae (strain ATCC 204508 / S288c) (Baker's yeast).